Consider the following 63-residue polypeptide: MQDMRDQNPPQGYPAAEQVSEQPGQDKKKKKPRFFETKQKGDRGFIEGCLFALCCCWICEMCF.

Residues 1–34 (MQDMRDQNPPQGYPAAEQVSEQPGQDKKKKKPRF) form a disordered region. A helical membrane pass occupies residues 40–56 (KGDRGFIEGCLFALCCC).

The protein belongs to the CYSTM1 family. Homodimer and heterodimers. Binds weakly to CYSTM4, CYSTM6 and CYSTM7. In terms of tissue distribution, mostly expressed in roots, flowers and siliques and, to a lower extent, in stems and leaves.

It is found in the cell membrane. The protein resides in the cytoplasm. In terms of biological role, involved in resistance to abiotic stress. In Arabidopsis thaliana (Mouse-ear cress), this protein is Protein CYSTEINE-RICH TRANSMEMBRANE MODULE 12.